A 577-amino-acid polypeptide reads, in one-letter code: MNKLYIGNLNESVTPADLEKVFAEHKISYSGQFLVKSGYAFVDCPDEHWAMKAIETFSGKVELQGKRLEIEHSVPKKQRSRKIQIRNIPPQLRWEVLDSLLAQYGTVENCEQVNTESETAVVNVTYSNREQTRQAIMKLNGHQLENHALKVSYIPDEQITQGPENGRRGGFGSRGQPRQGSPVAAGAPAKQQPVDIPLRLLVPTQYVGAIIGKEGATIRNITKQTQSKIDVHRKENAGAAEKAISVHSTPEGCSSACKMILEIMHKEAKDTKTADEVPLKILAHNNFVGRLIGKEGRNLKKVEQDTETKITISSLQDLTLYNPERTITVKGAIENCCRAEQEIMKKVREAYENDVAAMSLQSHLIPGLNLAAVGLFPASSSAVPPPPSSVTGAAPYSSFMQAPEQEMVQVFIPAQAVGAIIGKKGQHIKQLSRFASASIKIAPPETPDSKVRMVVITGPPEAQFKAQGRIYGKLKEENFFGPKEEVKLETHIRVPASAAGRVIGKGGKTVNELQNLTAAEVVVPRDQTPDENDQVIVKIIGHFYASQMAQRKIRDILAQVKQQHQKGQSNLAQARRK.

2 consecutive RRM domains span residues Asn2 to Pro75 and Arg81 to Asp156. Phosphoserine is present on residues Ser12 and Ser73. The tract at residues Asp156–Lys190 is disordered. Ser181 is modified (phosphoserine; by MTOR). KH domains lie at Asp195–Ile260, Glu276–Ile343, Gln405–Ile470, and Lys487–Ile553. Residues Ile312 to Pro323 form a sufficient for nuclear export region. The sufficient for nuclear export stretch occupies residues Glu485–Pro495. Thr528 carries the post-translational modification Phosphothreonine.

This sequence belongs to the RRM IMP/VICKZ family. As to quaternary structure, can form homodimers and heterodimers with IGF2BP1 and IGF2BP3. Component of the coding region determinant (CRD)-mediated complex, composed of DHX9, HNRNPU, IGF2BP1, SYNCRIP and YBX1. Identified in a mRNP complex, at least composed of DHX9, DDX3X, ELAVL1, HNRNPU, IGF2BP1, ILF3, PABPC1, PCBP2, PTBP2, STAU1, STAU2, SYNCRIP and YBX1. Associates with mRNP complex. Interacts with FMR1. Component of a multisubunit autoregulatory RNP complex (ARC), at least composed of IGF2BP1, PABPC1 and CSDE1. Interacts with AGO1 and AGO2. Interacts, through domains KH3 and KH4, with PABPC1 in an RNA-independent manner. Component of a TAU mRNP complex, at least composed of IGF2BP1, ELAVL4 and G3BP. Interacts with ELAVL4 in an RNA-dependent manner. Associates with microtubules and polysomes. Interacts with ELAVL1 and MATR3. Phosphorylated at Ser-181 by mTORC2 cotranslationally, promoting binding to the 3'-UTR of IGF2 mRNA. Expressed in zygotes and blastocysts (at protein level). Expressed in brain, skeletal muscle, trophoblasts of placenta, oocytes and spermatogonia (at protein level). Expressed in testis and ovary. Following colon injury, expressed in the wound bed mesenchyme during the first phase of repair, probably by colonic mesenchymal stem cells (at protein level).

It localises to the nucleus. The protein resides in the cytoplasm. Its subcellular location is the perinuclear region. The protein localises to the P-body. It is found in the stress granule. It localises to the cell projection. The protein resides in the lamellipodium. Its subcellular location is the dendrite. The protein localises to the dendritic spine. It is found in the growth cone. It localises to the filopodium. The protein resides in the axon. Functionally, RNA-binding factor that recruits target transcripts to cytoplasmic protein-RNA complexes (mRNPs). This transcript 'caging' into mRNPs allows mRNA transport and transient storage. It also modulates the rate and location at which target transcripts encounter the translational apparatus and shields them from endonuclease attacks or microRNA-mediated degradation. Preferentially binds to N6-methyladenosine (m6A)-containing mRNAs and increases their stability. Regulates localized beta-actin/ACTB mRNA translation, a crucial process for cell polarity, cell migration and neurite outgrowth. Co-transcriptionally associates with the ACTB mRNA in the nucleus. This binding involves a conserved 54-nucleotide element in the ACTB mRNA 3'-UTR, known as the 'zipcode'. The RNP thus formed is exported to the cytoplasm, binds to a motor protein and is transported along the cytoskeleton to the cell periphery. During transport, prevents ACTB mRNA from being translated into protein. When the RNP complex reaches its destination near the plasma membrane, IGF2BP1 is phosphorylated. This releases the mRNA, allowing ribosomal 40S and 60S subunits to assemble and initiate ACTB protein synthesis. Monomeric ACTB then assembles into the subcortical actin cytoskeleton. During neuronal development, key regulator of neurite outgrowth, growth cone guidance and neuronal cell migration, presumably through the spatiotemporal fine tuning of protein synthesis, such as that of ACTB. May regulate mRNA transport to activated synapses. Binds to the 3'-UTR of CD44 mRNA and stabilizes it, hence promotes cell adhesion and invadopodia formation in cancer cells. Binds to the oncofetal H19 transcript and regulates its localization. Binds to and stabilizes BTRC/FBW1A mRNA. Binds to the adenine-rich autoregulatory sequence (ARS) located in PABPC1 mRNA and represses its translation. PABPC1 mRNA-binding is stimulated by PABPC1 protein. Prevents BTRC/FBW1A mRNA degradation by disrupting microRNA-dependent interaction with AGO2. During cellular stress, such as oxidative stress or heat shock, stabilizes target mRNAs that are recruited to stress granules, including CD44, IGF2, MAPK4, MYC, PTEN, RAPGEF2 and RPS6KA5 transcripts. Interacts with GAP43 transcript and transports it to axons. Binds to the 3'-UTR of IGF2 mRNA by a mechanism of cooperative and sequential dimerization and regulates IGF2 mRNA subcellular localization and translation. Binds to MYC mRNA, in the coding region instability determinant (CRD) of the open reading frame (ORF), hence prevents MYC cleavage by endonucleases and possibly microRNA targeting to MYC-CRD. Binding to MYC mRNA is enhanced by m6A-modification of the CRD. Binds to and stabilizes ABCB1/MDR-1 mRNA. Binds to the neuron-specific TAU mRNA and regulates its localization. Plays a direct role in the transport and translation of transcripts required for axonal regeneration in adult sensory neurons. During interstinal wound repair, interacts with and stabilizes PTGS2 transcript. PTGS2 mRNA stabilization may be crucial for colonic mucosal wound healing. This Mus musculus (Mouse) protein is Insulin-like growth factor 2 mRNA-binding protein 1 (Igf2bp1).